We begin with the raw amino-acid sequence, 126 residues long: MFS14 protein (126 aa).

Residues 1 to 23 constitute a signal peptide (or 24, or 26); sequence MALEAATAPRALLAACLVLLVLG.

Enhanced expression in male flowers. Accumulates in the tapetum.

The protein is MFS14 protein (MFS14) of Zea mays (Maize).